Consider the following 409-residue polypeptide: All trans-polyprenyl-diphosphate synthase PDSS1 (409 aa).

Isopentenyl diphosphate is bound by residues lysine 128, arginine 131, and histidine 167. Residues aspartate 174 and aspartate 178 each contribute to the Mg(2+) site. Arginine 184 provides a ligand contact to isopentenyl diphosphate.

This sequence belongs to the FPP/GGPP synthase family. In terms of assembly, heterotetramer composed of 2 PDSS1/DPS1 and 2 PDSS2/DLP1 subunits. Requires Mg(2+) as cofactor.

It is found in the mitochondrion. It carries out the reaction 7 isopentenyl diphosphate + (2E,6E)-farnesyl diphosphate = all-trans-decaprenyl diphosphate + 7 diphosphate. The catalysed reaction is 6 isopentenyl diphosphate + (2E,6E)-farnesyl diphosphate = all-trans-nonaprenyl diphosphate + 6 diphosphate. It participates in cofactor biosynthesis; ubiquinone biosynthesis. In terms of biological role, heterotetrameric enzyme that catalyzes the condensation of farnesyl diphosphate (FPP), which acts as a primer, and isopentenyl diphosphate (IPP) to produce prenyl diphosphates of varying chain lengths and participates in the determination of the side chain of ubiquinone. Supplies nona and decaprenyl diphosphate, the precursors for the side chain of the isoprenoid quinones ubiquinone-9 (Q9)and ubiquinone-10 (Q10) respectively. The enzyme adds isopentenyl diphosphate molecules sequentially to farnesyl diphosphate with trans stereochemistry. This is All trans-polyprenyl-diphosphate synthase PDSS1 from Mus musculus (Mouse).